A 418-amino-acid chain; its full sequence is Glutamyl-tRNA reductase (418 aa).

Residues threonine 49 to arginine 52, serine 109, glutamate 114 to glutamine 116, and glutamine 120 each bind substrate. The active-site Nucleophile is cysteine 50. Glycine 189–isoleucine 194 provides a ligand contact to NADP(+).

It belongs to the glutamyl-tRNA reductase family. As to quaternary structure, homodimer.

It catalyses the reaction (S)-4-amino-5-oxopentanoate + tRNA(Glu) + NADP(+) = L-glutamyl-tRNA(Glu) + NADPH + H(+). The protein operates within porphyrin-containing compound metabolism; protoporphyrin-IX biosynthesis; 5-aminolevulinate from L-glutamyl-tRNA(Glu): step 1/2. Catalyzes the NADPH-dependent reduction of glutamyl-tRNA(Glu) to glutamate 1-semialdehyde (GSA). The protein is Glutamyl-tRNA reductase of Erwinia tasmaniensis (strain DSM 17950 / CFBP 7177 / CIP 109463 / NCPPB 4357 / Et1/99).